The chain runs to 450 residues: LanC-like protein 2 (450 aa).

G2 is lipidated: N-myristoyl glycine. Positions 2-15 (GETMSKRLKLHLGG) are interaction with inositol phospholipids. Y198 bears the Phosphotyrosine mark.

Belongs to the LanC-like protein family. Interacts with an array of inositol phospholipids such as phosphatidylinositol 3-phosphate (PI3P), phosphatidylinositol 4-phosphate (PI4P) and phosphatidylinositol 5-phosphate (PI5P). PIP-binding enhances membrane association. In terms of processing, myristoylated. Essential for membrane association. Expressed in brain and testis.

Its subcellular location is the nucleus. The protein resides in the cytoplasm. It localises to the cell membrane. Necessary for abscisic acid (ABA) binding on the cell membrane and activation of the ABA signaling pathway in granulocytes. This is LanC-like protein 2 (LANCL2) from Homo sapiens (Human).